A 328-amino-acid chain; its full sequence is tRNA uridine(34) hydroxylase (328 aa).

A Rhodanese domain is found at 130–224; sequence LDKDTVVLDT…YGKDPEVQGE (95 aa). Residue cysteine 184 is the Cysteine persulfide intermediate of the active site.

Belongs to the TrhO family.

It carries out the reaction uridine(34) in tRNA + AH2 + O2 = 5-hydroxyuridine(34) in tRNA + A + H2O. Its function is as follows. Catalyzes oxygen-dependent 5-hydroxyuridine (ho5U) modification at position 34 in tRNAs. The polypeptide is tRNA uridine(34) hydroxylase (Streptococcus pneumoniae (strain Hungary19A-6)).